Consider the following 286-residue polypeptide: Urease accessory protein UreD 2 (286 aa).

It belongs to the UreD family. As to quaternary structure, ureD, UreF and UreG form a complex that acts as a GTP-hydrolysis-dependent molecular chaperone, activating the urease apoprotein by helping to assemble the nickel containing metallocenter of UreC. The UreE protein probably delivers the nickel.

The protein localises to the cytoplasm. Functionally, required for maturation of urease via the functional incorporation of the urease nickel metallocenter. This Bradyrhizobium sp. (strain ORS 278) protein is Urease accessory protein UreD 2.